We begin with the raw amino-acid sequence, 229 residues long: 2,3-bisphosphoglycerate-dependent phosphoglycerate mutase (229 aa).

Substrate contacts are provided by residues 8–15, 21–22, Arg-60, 87–90, Lys-98, 114–115, and 183–184; these read RHGESAWN, TG, ERHY, RR, and GN. The active-site Tele-phosphohistidine intermediate is the His-9. Residue Glu-87 is the Proton donor/acceptor of the active site.

The protein belongs to the phosphoglycerate mutase family. BPG-dependent PGAM subfamily. Homodimer.

The enzyme catalyses (2R)-2-phosphoglycerate = (2R)-3-phosphoglycerate. It participates in carbohydrate degradation; glycolysis; pyruvate from D-glyceraldehyde 3-phosphate: step 3/5. Its function is as follows. Catalyzes the interconversion of 2-phosphoglycerate and 3-phosphoglycerate. The protein is 2,3-bisphosphoglycerate-dependent phosphoglycerate mutase of Polynucleobacter asymbioticus (strain DSM 18221 / CIP 109841 / QLW-P1DMWA-1) (Polynucleobacter necessarius subsp. asymbioticus).